Here is a 1912-residue protein sequence, read N- to C-terminus: Vitellogenin-1 (1912 aa).

An N-terminal signal peptide occupies residues 1-15; it reads MRGLISALVLTLVGS. Residues 24–663 enclose the Vitellogenin domain; the sequence is FGENKVYTYN…AGSLIPTMAV (640 aa). Asn-163 carries N-linked (GlcNAc...) asparagine glycosylation. Residues 948 to 972 form a disordered region; that stretch reads DSASGETDNIRDRQSVEDVSSGNSF. A glycan (N-linked (GlcNAc...) asparagine) is linked at Asn-991. 2 disordered regions span residues 1080–1329 and 1351–1432; these read KILD…SYDI and HWHS…RERN. Composition is skewed to low complexity over residues 1092–1124 and 1150–1235; these read NSRS…NRAS and SSSS…SSSK. An N-linked (GlcNAc...) asparagine glycan is attached at Asn-1206. The span at 1259-1269 shows a compositional bias: basic and acidic residues; that stretch reads EGERSVHEQKQ. Residues 1273-1299 are compositionally biased toward low complexity; that stretch reads SSSSSSSRASSNSRSTSSSTSSSSESS. A compositionally biased stretch (basic and acidic residues) spans 1306-1316; it reads WKQDREAETKR. Positions 1319–1328 are enriched in polar residues; that stretch reads SQFNSHSSYD. Positions 1357–1381 are enriched in low complexity; that stretch reads RTSSSSSSSSSESGSSHSNSSSSDS. N-linked (GlcNAc...) asparagine glycosylation occurs at Asn-1375. The segment covering 1397–1409 has biased composition (basic residues); it reads SHRHGEKAAHSSR. The VWFD domain maps to 1640–1818; that stretch reads STCEVSKGDF…SWVLLEETCS (179 aa). Intrachain disulfides connect Cys-1642/Cys-1781 and Cys-1665/Cys-1817. N-linked (GlcNAc...) asparagine glycans are attached at residues Asn-1662, Asn-1698, and Asn-1703.

In terms of processing, phosvitin, an egg yolk storage protein, is one of the most highly phosphorylated (10%) proteins in nature. Cathepsin D is responsible for intraoocytic processing of vitellogenin. Post-translationally, may contain intrachain disulfide bonds. As to expression, produced by the liver, secreted into the blood and then sequestered by receptor mediated endocytosis into growing oocytes, where it is generally cleaved, giving rise to the respective yolk components.

Its function is as follows. Precursor of the egg-yolk proteins that are sources of nutrients during early development of oviparous organisms. Functionally, phosvitin is believed to be of importance in sequestering calcium, iron and other cations for the developing embryo. The sequence is that of Vitellogenin-1 (VTG1) from Gallus gallus (Chicken).